We begin with the raw amino-acid sequence, 518 residues long: Transcription factor TT8 (518 aa).

2 coiled-coil regions span residues 220–240 (EVHE…MSEE) and 405–428 (VNHL…KRTR). Residues 359–408 (REDLSHVVAERRRREKLNEKFITLRSMVPFVTKMDKVSILGDTIAYVNHL) enclose the bHLH domain.

The protein belongs to the bHLH protein family. In terms of assembly, homodimer. Interacts with MYB4, MYB5, MYB6, MYB82, MYB113, MYB114, MYB75/PAP1, MYB90/PAP2, and TT2. In terms of tissue distribution, buds, flowers and developing siliques, but not in leaves, stems and roots.

It is found in the nucleus. Functionally, transcription activator, when associated with MYB75/PAP1 or MYB90/PAP2. Involved in the control of flavonoid pigmentation. Plays a key role in regulating leucoanthocyanidin reductase (BANYULS) and dihydroflavonol-4-reductase (DFR). Not required for leucoanthocyanidin dioxygenase (LDOX) expression. This is Transcription factor TT8 from Arabidopsis thaliana (Mouse-ear cress).